A 353-amino-acid polypeptide reads, in one-letter code: Thiamine-phosphate synthase (353 aa).

Residues 1–128 (MESMPVAPST…ARTAAAVRYA (128 aa)) are unknown. The thiamine-phosphate synthase stretch occupies residues 129–353 (LYDHEVRILE…ASRQLLDLLT (225 aa)). Residues 185 to 189 (QYRRK) and N217 each bind 4-amino-2-methyl-5-(diphosphooxymethyl)pyrimidine. D218 and D237 together coordinate Mg(2+). 4-amino-2-methyl-5-(diphosphooxymethyl)pyrimidine is bound at residue S256. 282 to 284 (TAT) serves as a coordination point for 2-[(2R,5Z)-2-carboxy-4-methylthiazol-5(2H)-ylidene]ethyl phosphate. K285 is a binding site for 4-amino-2-methyl-5-(diphosphooxymethyl)pyrimidine. 2-[(2R,5Z)-2-carboxy-4-methylthiazol-5(2H)-ylidene]ethyl phosphate is bound by residues G312 and 332-333 (VS).

This sequence belongs to the thiamine-phosphate synthase family. The cofactor is Mg(2+).

The enzyme catalyses 2-[(2R,5Z)-2-carboxy-4-methylthiazol-5(2H)-ylidene]ethyl phosphate + 4-amino-2-methyl-5-(diphosphooxymethyl)pyrimidine + 2 H(+) = thiamine phosphate + CO2 + diphosphate. The catalysed reaction is 2-(2-carboxy-4-methylthiazol-5-yl)ethyl phosphate + 4-amino-2-methyl-5-(diphosphooxymethyl)pyrimidine + 2 H(+) = thiamine phosphate + CO2 + diphosphate. It catalyses the reaction 4-methyl-5-(2-phosphooxyethyl)-thiazole + 4-amino-2-methyl-5-(diphosphooxymethyl)pyrimidine + H(+) = thiamine phosphate + diphosphate. Its pathway is cofactor biosynthesis; thiamine diphosphate biosynthesis; thiamine phosphate from 4-amino-2-methyl-5-diphosphomethylpyrimidine and 4-methyl-5-(2-phosphoethyl)-thiazole: step 1/1. Its function is as follows. Condenses 4-methyl-5-(beta-hydroxyethyl)thiazole monophosphate (THZ-P) and 2-methyl-4-amino-5-hydroxymethyl pyrimidine pyrophosphate (HMP-PP) to form thiamine monophosphate (TMP). The sequence is that of Thiamine-phosphate synthase from Synechococcus sp. (strain WH7803).